An 86-amino-acid chain; its full sequence is Large ribosomal subunit protein uL23 (86 aa).

The protein belongs to the universal ribosomal protein uL23 family. As to quaternary structure, part of the 50S ribosomal subunit. Contacts protein L29.

In terms of biological role, binds to 23S rRNA. One of the proteins that surrounds the polypeptide exit tunnel on the outside of the ribosome. The polypeptide is Large ribosomal subunit protein uL23 (Methanococcus maripaludis (strain C6 / ATCC BAA-1332)).